Here is a 445-residue protein sequence, read N- to C-terminus: Glutamyl-tRNA(Gln) amidotransferase subunit D (445 aa).

Residues serine 93–asparagine 425 form the Asparaginase/glutaminase domain. Active-site residues include threonine 103, threonine 179, aspartate 180, and lysine 258.

It belongs to the asparaginase 1 family. GatD subfamily. In terms of assembly, heterodimer of GatD and GatE.

The catalysed reaction is L-glutamyl-tRNA(Gln) + L-glutamine + ATP + H2O = L-glutaminyl-tRNA(Gln) + L-glutamate + ADP + phosphate + H(+). Allows the formation of correctly charged Gln-tRNA(Gln) through the transamidation of misacylated Glu-tRNA(Gln) in organisms which lack glutaminyl-tRNA synthetase. The reaction takes place in the presence of glutamine and ATP through an activated gamma-phospho-Glu-tRNA(Gln). The GatDE system is specific for glutamate and does not act on aspartate. This is Glutamyl-tRNA(Gln) amidotransferase subunit D from Saccharolobus islandicus (strain L.S.2.15 / Lassen #1) (Sulfolobus islandicus).